A 572-amino-acid chain; its full sequence is Urease subunit alpha (572 aa).

The 439-residue stretch at 134 to 572 (GGIDSHIHFI…LPLAQRYFLF (439 aa)) folds into the Urease domain. Ni(2+)-binding residues include His139, His141, and Lys222. N6-carboxylysine is present on Lys222. His224 serves as a coordination point for substrate. Ni(2+)-binding residues include His251 and His277. His325 functions as the Proton donor in the catalytic mechanism. Asp365 provides a ligand contact to Ni(2+).

Belongs to the metallo-dependent hydrolases superfamily. Urease alpha subunit family. Heterotrimer of UreA (gamma), UreB (beta) and UreC (alpha) subunits. Three heterotrimers associate to form the active enzyme. It depends on Ni cation as a cofactor. In terms of processing, carboxylation allows a single lysine to coordinate two nickel ions.

It localises to the cytoplasm. It catalyses the reaction urea + 2 H2O + H(+) = hydrogencarbonate + 2 NH4(+). It functions in the pathway nitrogen metabolism; urea degradation; CO(2) and NH(3) from urea (urease route): step 1/1. In Paracidovorax citrulli (strain AAC00-1) (Acidovorax citrulli), this protein is Urease subunit alpha.